The sequence spans 803 residues: Sensor histidine kinase CheAY (803 aa).

A Phosphohistidine modification is found at His47. Disordered regions lie at residues 134–185 (LESA…DEPD) and 209–255 (EADK…ENKA). Composition is skewed to basic and acidic residues over residues 136-166 (SAKERTTEAPQKENKEETKEEAKEENKENKA), 209-226 (EADKERRAQKKQEAKPKQ), and 233-254 (ETPKAPKTETKAKAKADTEENK). Positions 270–517 (RLDHLMNLIG…TQKLKIPLTL (248 aa)) constitute a Histidine kinase domain. His273 carries the phosphohistidine; by autocatalysis modification. Residues 519 to 653 (IIQALLVGVQ…VGAMMDMAKS (135 aa)) enclose the CheW-like domain. Residues 678 to 796 (IVLAIDDSST…YLTTVVKRSI (119 aa)) form the Response regulatory domain. Position 729 is a 4-aspartylphosphate (Asp729).

Autophosphorylated.

The enzyme catalyses ATP + protein L-histidine = ADP + protein N-phospho-L-histidine.. Its function is as follows. Member of the two-component regulatory system CheAY/CheY that regulates chemotaxis and colonization of the gastric mucosa. Functions as a sensor protein kinase which is autophosphorylated at a histidine residue and transfers its phosphate group to the conserved aspartic acid residue in the regulatory domain of CheY. In turn, phosphorylated CheY (CheY-P) interacts with the flagellar motor protein FliM to cause clockwise flagellar rotation and bacterial reversals, as opposed to straight swimming when CheY is not phosphorylated. The protein is Sensor histidine kinase CheAY (cheAY) of Helicobacter pylori (strain ATCC 700392 / 26695) (Campylobacter pylori).